Reading from the N-terminus, the 473-residue chain is Ribulose bisphosphate carboxylase large chain 2 (473 aa).

Substrate contacts are provided by asparagine 116 and threonine 166. Lysine 168 functions as the Proton acceptor in the catalytic mechanism. Residue lysine 170 coordinates substrate. Lysine 194, aspartate 196, and glutamate 197 together coordinate Mg(2+). Lysine 194 carries the N6-carboxylysine modification. Histidine 287 (proton acceptor) is an active-site residue. Positions 288, 320, and 372 each coordinate substrate.

This sequence belongs to the RuBisCO large chain family. Type I subfamily. In terms of assembly, heterohexadecamer of 8 large chains and 8 small chains. Requires Mg(2+) as cofactor.

The enzyme catalyses 2 (2R)-3-phosphoglycerate + 2 H(+) = D-ribulose 1,5-bisphosphate + CO2 + H2O. The catalysed reaction is D-ribulose 1,5-bisphosphate + O2 = 2-phosphoglycolate + (2R)-3-phosphoglycerate + 2 H(+). In terms of biological role, ruBisCO catalyzes two reactions: the carboxylation of D-ribulose 1,5-bisphosphate, the primary event in carbon dioxide fixation, as well as the oxidative fragmentation of the pentose substrate. Both reactions occur simultaneously and in competition at the same active site. The protein is Ribulose bisphosphate carboxylase large chain 2 of Acidithiobacillus ferrooxidans (Thiobacillus ferrooxidans).